We begin with the raw amino-acid sequence, 55 residues long: uncharacterized protein (55 aa).

Positions 1–15 (MVGQEQLESSPLCQH) are enriched in polar residues. Residues 1–26 (MVGQEQLESSPLCQHSDNETETKREC) are disordered. Positions 16–26 (SDNETETKREC) are enriched in basic and acidic residues.

This is an uncharacterized protein from Escherichia coli (strain K12).